Reading from the N-terminus, the 228-residue chain is Endonuclease V (228 aa).

The Mg(2+) site is built by D43 and D109.

This sequence belongs to the endonuclease V family. Mg(2+) is required as a cofactor.

The protein resides in the cytoplasm. It carries out the reaction Endonucleolytic cleavage at apurinic or apyrimidinic sites to products with a 5'-phosphate.. In terms of biological role, DNA repair enzyme involved in the repair of deaminated bases. Selectively cleaves double-stranded DNA at the second phosphodiester bond 3' to a deoxyinosine leaving behind the intact lesion on the nicked DNA. The protein is Endonuclease V of Dictyoglomus turgidum (strain DSM 6724 / Z-1310).